Consider the following 31-residue polypeptide: Cyclotide mden-L (31 aa).

The cyclopeptide (Gly-Asn) cross-link spans 1-31; that stretch reads GSIPCGESCVYIPCISAVLGCSCKNKVCYRN. 3 cysteine pairs are disulfide-bonded: Cys-5/Cys-21, Cys-9/Cys-23, and Cys-14/Cys-28.

This sequence belongs to the cyclotide family. Bracelet subfamily. This is a cyclic peptide.

Functionally, probably participates in a plant defense mechanism. In Melicytus dentatus (Tree violet), this protein is Cyclotide mden-L.